The following is a 635-amino-acid chain: Protein NSP-INTERACTING KINASE 2 (635 aa).

Positions 1 to 32 are cleaved as a signal peptide; it reads MLQGRREAKKSYALFSSTFFFFFICFLSSSSA. Residues 33–248 lie on the Extracellular side of the membrane; sequence ELTDKGVNFE…DGGTKNRKIA (216 aa). 2 N-linked (GlcNAc...) asparagine glycosylation sites follow: Asn-92 and Asn-103. LRR repeat units follow at residues 104-128, 129-153, 155-176, and 177-200; these read LTNLQTVLLQNNYITGNIPHEIGKL, MKLKTLDLSTNNFTGQIPFTLSYSK, LQYLRVNNNSLTGTIPSSLANM, and TQLTFLDLSYNNLSGPVPRSLAKT. Residues Asn-140, Asn-162, Asn-175, Asn-188, Asn-219, Asn-231, and Asn-235 are each glycosylated (N-linked (GlcNAc...) asparagine). The disordered stretch occupies residues 214–242; the sequence is TEKDCNGTQPKPMSITLNSSQNKSSDGGT. Residues 219–241 show a composition bias toward polar residues; it reads NGTQPKPMSITLNSSQNKSSDGG. Residues 249–269 traverse the membrane as a helical segment; it reads VVFGVSLTCVCLLIIGFGFLL. Residues 270–635 are Cytoplasmic-facing; it reads WWRRRHNKQV…VQAMELSGPR (366 aa). Phosphothreonine is present on Thr-309. In terms of domain architecture, Protein kinase spans 312–591; it reads FSSKNLVGKG…EGDGLVEKWE (280 aa). ATP-binding positions include 318 to 326 and Lys-340; that span reads VGKGGFGNV. A phosphoserine mark is found at Ser-393 and Ser-396. Thr-408 is modified (phosphothreonine). An interaction with geminivirus NSP protein region spans residues 422-502; that stretch reads YLHEQCDPKI…DVFGFGILLL (81 aa). Asp-435 (proton acceptor) is an active-site residue. A phosphothreonine mark is found at Thr-468, Thr-469, and Thr-474. A Phosphotyrosine modification is found at Tyr-482. Residue Ser-484 is modified to Phosphoserine. Phosphothreonine is present on Thr-485. At Ser-489 the chain carries Phosphoserine. Thr-564 carries the phosphothreonine modification. Residues 593 to 613 show a composition bias toward polar residues; that stretch reads SSQRAETNRSYSKPNEFSSSE. The segment at 593–621 is disordered; the sequence is SSQRAETNRSYSKPNEFSSSERYSDLTDD.

Belongs to the protein kinase superfamily. Ser/Thr protein kinase family. As to quaternary structure, oligomer. Interacts with geminivirus nuclear shuttle protein (NSP). Post-translationally, autophosphorylated. As to expression, expressed in flowers and roots.

The protein resides in the cell membrane. It carries out the reaction L-seryl-[protein] + ATP = O-phospho-L-seryl-[protein] + ADP + H(+). The enzyme catalyses L-threonyl-[protein] + ATP = O-phospho-L-threonyl-[protein] + ADP + H(+). With respect to regulation, inhibited by the viral nuclear shuttle protein (NSP) that binds to the region required for oligomerization. In terms of biological role, involved in defense response to geminivirus infection. Phosphorylates RPL10A in vitro. This chain is Protein NSP-INTERACTING KINASE 2 (NIK2), found in Arabidopsis thaliana (Mouse-ear cress).